The sequence spans 381 residues: Fatty acid elongase 6 (381 aa).

7 helical membrane passes run 10–30, 69–89, 107–127, 153–173, 182–202, 216–236, and 280–300; these read IAAAIEVPDWVLTKSAALVYS, LPYLNPWHVIASILAYLSLIV, GLVHNLGLHLLSLYMSLGLMI, LIWLFYVSKVVEWVDTVIMLL, FLHVYHHTTVFVLWWLALLVA, GVHVFMYGYYFLTLLFPSGIV, and LLQILFWYMISLLALFGNFLV. A HxxHH motif motif is present at residues 184 to 188; sequence HVYHH. Histidine 187 (nucleophile) is an active-site residue. The interval 362–381 is disordered; that stretch reads RKNGNGNGQKASLQAMAGSR.

It belongs to the ELO family.

It is found in the membrane. Its pathway is lipid metabolism; polyunsaturated fatty acid biosynthesis. Its function is as follows. Involved in the synthesis of fatty acids. Elongates C18 polyunsaturated fatty acids (PUFAs) with a preference for Delta6 PUFAs. This is Fatty acid elongase 6 from Leishmania major.